A 104-amino-acid polypeptide reads, in one-letter code: Phosphoribosyl-ATP pyrophosphatase (104 aa).

This sequence belongs to the PRA-PH family.

It is found in the cytoplasm. It catalyses the reaction 1-(5-phospho-beta-D-ribosyl)-ATP + H2O = 1-(5-phospho-beta-D-ribosyl)-5'-AMP + diphosphate + H(+). The protein operates within amino-acid biosynthesis; L-histidine biosynthesis; L-histidine from 5-phospho-alpha-D-ribose 1-diphosphate: step 2/9. In Streptococcus thermophilus (strain ATCC BAA-491 / LMD-9), this protein is Phosphoribosyl-ATP pyrophosphatase.